The sequence spans 155 residues: Protein SprT-like (155 aa).

The SprT-like domain occupies 7-145 (QRHMEEVSLQ…GSCGGKLIQT (139 aa)). His67 is a binding site for Zn(2+). Glu68 is an active-site residue. Zn(2+) is bound at residue His71.

This sequence belongs to the SprT family. Requires Zn(2+) as cofactor.

Its subcellular location is the cytoplasm. The sequence is that of Protein SprT-like from Listeria monocytogenes serovar 1/2a (strain ATCC BAA-679 / EGD-e).